Here is a 508-residue protein sequence, read N- to C-terminus: DNA-directed RNA polymerase subunit Rpo1C (508 aa).

A unknown region spans residues 1-123 (MIIWKDTAKN…REKYEYEKKV (123 aa)). Residues 124 to 508 (SSQVLDVIAE…IYKGYPKTKK (385 aa)) are DNA-directed RNA polymerase subunit Rpo1C.

Belongs to the RNA polymerase beta' chain family. As to quaternary structure, part of the RNA polymerase complex.

The protein localises to the cytoplasm. The catalysed reaction is RNA(n) + a ribonucleoside 5'-triphosphate = RNA(n+1) + diphosphate. DNA-dependent RNA polymerase (RNAP) catalyzes the transcription of DNA into RNA using the four ribonucleoside triphosphates as substrates. Forms part of the jaw domain. This chain is DNA-directed RNA polymerase subunit Rpo1C, found in Thermoplasma volcanium (strain ATCC 51530 / DSM 4299 / JCM 9571 / NBRC 15438 / GSS1).